A 220-amino-acid polypeptide reads, in one-letter code: 2-dehydro-3-deoxy-phosphogluconate aldolase (220 aa).

E48 serves as the catalytic Proton acceptor. Residues R52, T76, and K136 each coordinate pyruvate. K136 acts as the Schiff-base intermediate with substrate in catalysis.

This sequence belongs to the KHG/KDPG aldolase family. In terms of assembly, homotrimer.

It carries out the reaction 2-dehydro-3-deoxy-6-phospho-D-gluconate = D-glyceraldehyde 3-phosphate + pyruvate. Its pathway is carbohydrate acid metabolism; 2-dehydro-3-deoxy-D-gluconate degradation; D-glyceraldehyde 3-phosphate and pyruvate from 2-dehydro-3-deoxy-D-gluconate: step 2/2. Functionally, involved in the degradation of glucose via the Entner-Doudoroff pathway. Catalyzes the reversible, stereospecific retro-aldol cleavage of 2-keto-3-deoxy-6-phosphogluconate (KDPG) to pyruvate and D-glyceraldehyde-3-phosphate. In Pseudomonas aeruginosa (strain ATCC 15692 / DSM 22644 / CIP 104116 / JCM 14847 / LMG 12228 / 1C / PRS 101 / PAO1), this protein is 2-dehydro-3-deoxy-phosphogluconate aldolase (eda).